Here is a 347-residue protein sequence, read N- to C-terminus: NADH-quinone oxidoreductase subunit H 1 (347 aa).

Transmembrane regions (helical) follow at residues 13 to 33, 50 to 70, 82 to 102, 115 to 135, 161 to 181, 198 to 218, 263 to 283, 286 to 306, and 321 to 341; these read IIMI…IAYV, PNVV…KFVF, AVFL…WAVV, VGIL…IMGG, IGFV…TDIV, FLDW…ISAL, CALT…IWIL, VPGI…FAMV, and LGWK…AFVL.

The protein belongs to the complex I subunit 1 family. In terms of assembly, NDH-1 is composed of 14 different subunits. Subunits NuoA, H, J, K, L, M, N constitute the membrane sector of the complex.

It localises to the cell inner membrane. The catalysed reaction is a quinone + NADH + 5 H(+)(in) = a quinol + NAD(+) + 4 H(+)(out). In terms of biological role, NDH-1 shuttles electrons from NADH, via FMN and iron-sulfur (Fe-S) centers, to quinones in the respiratory chain. The immediate electron acceptor for the enzyme in this species is believed to be ubiquinone. Couples the redox reaction to proton translocation (for every two electrons transferred, four hydrogen ions are translocated across the cytoplasmic membrane), and thus conserves the redox energy in a proton gradient. This subunit may bind ubiquinone. This is NADH-quinone oxidoreductase subunit H 1 from Rhizobium etli (strain ATCC 51251 / DSM 11541 / JCM 21823 / NBRC 15573 / CFN 42).